The primary structure comprises 139 residues: Probable disulfide formation protein C 1 (139 aa).

A helical membrane pass occupies residues 8-27; that stretch reads EYALFTAWGASFIATLGSLY. The cysteines at positions 37 and 40 are disulfide-linked. 2 helical membrane passes run 42-61 and 68-85; these read YQRI…VVKK and YSLP…YHYV. C99 and C104 are joined by a disulfide. The helical transmembrane segment at 113–135 threads the bilayer; sequence GFVTIPFLALIGFITIAVCSFIV.

This sequence belongs to the DsbB family. BdbC subfamily.

The protein localises to the cell membrane. In terms of biological role, required for disulfide bond formation in some proteins. The sequence is that of Probable disulfide formation protein C 1 (bdbC1) from Bacillus anthracis.